A 478-amino-acid chain; its full sequence is Glycogen synthase (478 aa).

Residue K15 participates in ADP-alpha-D-glucose binding.

It belongs to the glycosyltransferase 1 family. Bacterial/plant glycogen synthase subfamily.

The enzyme catalyses [(1-&gt;4)-alpha-D-glucosyl](n) + ADP-alpha-D-glucose = [(1-&gt;4)-alpha-D-glucosyl](n+1) + ADP + H(+). It functions in the pathway glycan biosynthesis; glycogen biosynthesis. In terms of biological role, synthesizes alpha-1,4-glucan chains using ADP-glucose. In Enterobacter sp. (strain 638), this protein is Glycogen synthase.